Here is a 387-residue protein sequence, read N- to C-terminus: MEQNRFKKETKTCSASWPRAPQSTLCATDRLELTYDVYTSAERQRRSRTATRLNLVFLHGSGMSKVVWEYYLPRLVAADAEGNYAIDKVLLIDQVNHGDSAVRNRGRLGTNFNWIDGARDVLKIATCELGSIDSHPALNVVIGHSMGGFQALACDVLQPNLFHLLILIEPVVITRKAIGAGRPGLPPDSPQIPENLYNSLRLKTCDHFANESEYVKYMRNGSFFTNAHSQILQNIIDFERTKASGDDEDGGPVRTKMEQAQNLLCYMNMQTFAPFLISNVKFVRKRTIHIVGARSNWCPPQNQLFLQKTLQNYHLDVIPGGSHLVNVEAPDLVIERINHHIHEFVLTSPLQSSHIPQLTLEERAVMFDRAFDSFKNEALVKTTKQKL.

Positions 385–387 are peroxisomal targeting signal type 1; sequence QKL.

It is found in the peroxisome matrix. Has acyl esterase, lipase and phospholipase A activity. This chain is Peroxisomal membrane protein LPX1 (LPX1), found in Saccharomyces cerevisiae (strain ATCC 204508 / S288c) (Baker's yeast).